Consider the following 212-residue polypeptide: Ribosomal RNA small subunit methyltransferase G (212 aa).

Residues glycine 80, leucine 85, alanine 131–glutamate 132, and arginine 146 contribute to the S-adenosyl-L-methionine site.

It belongs to the methyltransferase superfamily. RNA methyltransferase RsmG family.

It is found in the cytoplasm. The catalysed reaction is guanosine(527) in 16S rRNA + S-adenosyl-L-methionine = N(7)-methylguanosine(527) in 16S rRNA + S-adenosyl-L-homocysteine. In terms of biological role, specifically methylates the N7 position of guanine in position 527 of 16S rRNA. This chain is Ribosomal RNA small subunit methyltransferase G, found in Stenotrophomonas maltophilia (strain K279a).